Here is a 300-residue protein sequence, read N- to C-terminus: 7-methylguanosine phosphate-specific 5'-nucleotidase (300 aa).

Residue Asp-41 is the Nucleophile of the active site. Asp-41 and Asp-43 together coordinate Mg(2+). Asp-43 (proton donor) is an active-site residue. Glu-88 contacts CMP. Residue Glu-88 participates in N(7)-methyl-GMP binding. Residues 156–157 (SA) and Lys-205 contribute to the substrate site. Mg(2+) is bound at residue Asp-230. An N6-acetyllysine modification is found at Lys-256.

The protein belongs to the pyrimidine 5'-nucleotidase family. In terms of assembly, monomer.

The protein resides in the cytoplasm. It carries out the reaction N(7)-methyl-GMP + H2O = N(7)-methylguanosine + phosphate. The enzyme catalyses CMP + H2O = cytidine + phosphate. The catalysed reaction is a ribonucleoside 5'-phosphate + H2O = a ribonucleoside + phosphate. In terms of biological role, specifically hydrolyzes 7-methylguanosine monophosphate (m(7)GMP) to 7-methylguanosine and inorganic phosphate. The specific activity for m(7)GMP may protect cells against undesired salvage of m(7)GMP and its incorporation into nucleic acids. Also has weak activity for CMP. UMP and purine nucleotides are poor substrates. The chain is 7-methylguanosine phosphate-specific 5'-nucleotidase (NT5C3B) from Homo sapiens (Human).